The chain runs to 154 residues: Protein X (154 aa).

Residues 68–117 form a mitochondrial targeting sequence region; the sequence is PCALRFTSARCMATTVNAHQILPKVLHKRTLGLPAMSTTDLEAYFKDCLF.

It belongs to the orthohepadnavirus protein X family. As to quaternary structure, may form homodimer. May interact with host CEBPA, CFLAR, CREB1, DDB1, E4F1, HBXIP, HSPD1/HSP60, NFKBIA, POLR2E and SMAD4. Interacts with host SMC5-SMC6 complex and induces its degradation. Interacts with host TRPC4AP; leading to prevent ubiquitination of TRPC4AP. Interacts with host PLSCR1; this interaction promotes ubiquitination and degradation of HBx and impairs HBx-mediated cell proliferation. In terms of processing, a fraction may be phosphorylated in insect cells and HepG2 cells, a human hepatoblastoma cell line. Phosphorylated in vitro by host protein kinase C or mitogen-activated protein kinase. N-acetylated in insect cells.

The protein resides in the host cytoplasm. Its subcellular location is the host nucleus. It localises to the host mitochondrion. Functionally, multifunctional protein that plays a role in silencing host antiviral defenses and promoting viral transcription. Does not seem to be essential for HBV infection. May be directly involved in development of cirrhosis and liver cancer (hepatocellular carcinoma). Most of cytosolic activities involve modulation of cytosolic calcium. The effect on apoptosis is controversial depending on the cell types in which the studies have been conducted. May induce apoptosis by localizing in mitochondria and causing loss of mitochondrial membrane potential. May also modulate apoptosis by binding host CFLAR, a key regulator of the death-inducing signaling complex (DISC). Promotes viral transcription by using the host E3 ubiquitin ligase DDB1 to target the SMC5-SMC6 complex to proteasomal degradation. This host complex would otherwise bind to viral episomal DNA, and prevents its transcription. Moderately stimulates transcription of many different viral and cellular transcription elements. Promoters and enhancers stimulated by HBx contain DNA binding sites for NF-kappa-B, AP-1, AP-2, c-EBP, ATF/CREB, or the calcium-activated factor NF-AT. The polypeptide is Protein X (Hepatitis B virus genotype A3 (isolate Cameroon/CMR983/1994) (HBV-A)).